Reading from the N-terminus, the 383-residue chain is Lipid-A-disaccharide synthase (383 aa).

Belongs to the LpxB family.

It carries out the reaction a lipid X + a UDP-2-N,3-O-bis[(3R)-3-hydroxyacyl]-alpha-D-glucosamine = a lipid A disaccharide + UDP + H(+). The protein operates within bacterial outer membrane biogenesis; LPS lipid A biosynthesis. Functionally, condensation of UDP-2,3-diacylglucosamine and 2,3-diacylglucosamine-1-phosphate to form lipid A disaccharide, a precursor of lipid A, a phosphorylated glycolipid that anchors the lipopolysaccharide to the outer membrane of the cell. This chain is Lipid-A-disaccharide synthase, found in Trichlorobacter lovleyi (strain ATCC BAA-1151 / DSM 17278 / SZ) (Geobacter lovleyi).